We begin with the raw amino-acid sequence, 159 residues long: Transmembrane protein 92 (159 aa).

The signal sequence occupies residues 1–26 (MSQAWVPGLAPTLLFSLLAGPQKIAA). At 27–57 (KCGLILACPKGFKCCGDSCCQENELFPGPVR) the chain is on the extracellular side. The chain crosses the membrane as a helical span at residues 58 to 78 (IFVIIFLVILSVFCICGLAKC). Topologically, residues 79–159 (FCRNCREPEP…DQRGIDNPAF (81 aa)) are cytoplasmic. The interval 122–159 (EVILKPSLGPTPTEPPPPYSFRPEEYTGDQRGIDNPAF) is disordered.

It localises to the membrane. In Homo sapiens (Human), this protein is Transmembrane protein 92 (TMEM92).